The following is a 311-amino-acid chain: tRNA dimethylallyltransferase (311 aa).

12 to 19 (GPTASGKT) contacts ATP. 14–19 (TASGKT) is a binding site for substrate. Interaction with substrate tRNA regions lie at residues 37–40 (DSAM) and 161–165 (QRIQR).

This sequence belongs to the IPP transferase family. As to quaternary structure, monomer. Requires Mg(2+) as cofactor.

It carries out the reaction adenosine(37) in tRNA + dimethylallyl diphosphate = N(6)-dimethylallyladenosine(37) in tRNA + diphosphate. In terms of biological role, catalyzes the transfer of a dimethylallyl group onto the adenine at position 37 in tRNAs that read codons beginning with uridine, leading to the formation of N6-(dimethylallyl)adenosine (i(6)A). In Coxiella burnetii (strain Dugway 5J108-111), this protein is tRNA dimethylallyltransferase.